The sequence spans 474 residues: uncharacterized protein (474 aa).

Polar residues predominate over residues 1–14; that stretch reads MGSRYPSHQLSNGL. The interval 1 to 137 is disordered; the sequence is MGSRYPSHQL…QSGGVTRQNS (137 aa). Phosphoserine is present on Ser45. Composition is skewed to polar residues over residues 73-83, 97-113, and 125-137; these read RSGSFAGTAQS, SLAS…NSGP, and SGPQ…RQNS. The residue at position 169 (Ser169) is a Phosphoserine. The next 2 helical transmembrane spans lie at 210-230 and 236-256; these read VLWL…FILG and ILLV…IWNI.

The protein resides in the membrane. This is an uncharacterized protein from Arabidopsis thaliana (Mouse-ear cress).